The sequence spans 297 residues: UDP-3-O-acyl-N-acetylglucosamine deacetylase (297 aa).

Residues His77, His236, and Asp240 each contribute to the Zn(2+) site. His263 (proton donor) is an active-site residue.

Belongs to the LpxC family. The cofactor is Zn(2+).

It carries out the reaction a UDP-3-O-[(3R)-3-hydroxyacyl]-N-acetyl-alpha-D-glucosamine + H2O = a UDP-3-O-[(3R)-3-hydroxyacyl]-alpha-D-glucosamine + acetate. Its pathway is glycolipid biosynthesis; lipid IV(A) biosynthesis; lipid IV(A) from (3R)-3-hydroxytetradecanoyl-[acyl-carrier-protein] and UDP-N-acetyl-alpha-D-glucosamine: step 2/6. Its function is as follows. Catalyzes the hydrolysis of UDP-3-O-myristoyl-N-acetylglucosamine to form UDP-3-O-myristoylglucosamine and acetate, the committed step in lipid A biosynthesis. The chain is UDP-3-O-acyl-N-acetylglucosamine deacetylase from Psychrobacter sp. (strain PRwf-1).